The primary structure comprises 591 residues: L-fucose isomerase (591 aa).

Active-site proton acceptor residues include Glu337 and Asp361. 3 residues coordinate Mn(2+): Glu337, Asp361, and His528.

The protein belongs to the L-fucose isomerase family. In terms of assembly, homohexamer. The cofactor is Mn(2+).

The protein localises to the cytoplasm. The enzyme catalyses L-fucose = L-fuculose. It participates in carbohydrate degradation; L-fucose degradation; L-lactaldehyde and glycerone phosphate from L-fucose: step 1/3. In terms of biological role, converts the aldose L-fucose into the corresponding ketose L-fuculose. The protein is L-fucose isomerase of Escherichia coli O6:H1 (strain CFT073 / ATCC 700928 / UPEC).